Here is a 106-residue protein sequence, read N- to C-terminus: Adipokinetic hormone/corazonin-related peptide (106 aa).

A signal peptide spans 1–25; the sequence is MRNSIYKLIMFAVLCMVLTSSLSYA. Gln26 bears the Pyrrolidone carboxylic acid mark. Residue Ala35 is modified to Alanine amide. Residues 39–106 constitute a propeptide that is removed on maturation; the sequence is SLAEAAQSTG…GLPLFSNGHL (68 aa).

This sequence belongs to the AKH/HRTH/RPCH family. Only expressed in the head and thorax body segments of adults. Is more expressed in adult males than in females.

The protein localises to the secreted. Neuropeptide with neuromodulator or neurotransmitter role that activates the adipokinetic hormone/corazonin-related peptide receptor (ACPR). May function in regulation of post-ecdysis activities. Does not activate the A.gambiae adipokinetic hormone (AKH) and corazonin (CRZ) receptors. This Aedes aegypti (Yellowfever mosquito) protein is Adipokinetic hormone/corazonin-related peptide.